The chain runs to 480 residues: 6-phosphogluconate dehydrogenase, decarboxylating 1 (480 aa).

NADP(+) is bound by residues 10–15 (GLAVMG), 33–35 (NRT), 77–79 (VKA), and N105. Substrate contacts are provided by residues N105 and 131 to 133 (SGG). K186 functions as the Proton acceptor in the catalytic mechanism. Residue 189–190 (HN) participates in substrate binding. The Proton donor role is filled by E193. Substrate contacts are provided by Y194, K264, R291, R450, and H456.

It belongs to the 6-phosphogluconate dehydrogenase family. In terms of assembly, homodimer. As to expression, highly expressed in inflorescence, lowly expressed in root and embryos and almost absent in leaves.

It localises to the cytoplasm. The catalysed reaction is 6-phospho-D-gluconate + NADP(+) = D-ribulose 5-phosphate + CO2 + NADPH. Its pathway is carbohydrate degradation; pentose phosphate pathway; D-ribulose 5-phosphate from D-glucose 6-phosphate (oxidative stage): step 3/3. Functionally, catalyzes the oxidative decarboxylation of 6-phosphogluconate to ribulose 5-phosphate and CO(2), with concomitant reduction of NADP to NADPH. The polypeptide is 6-phosphogluconate dehydrogenase, decarboxylating 1 (G6PGH1) (Oryza sativa subsp. japonica (Rice)).